Here is a 155-residue protein sequence, read N- to C-terminus: SsrA-binding protein (155 aa).

Belongs to the SmpB family.

It is found in the cytoplasm. Required for rescue of stalled ribosomes mediated by trans-translation. Binds to transfer-messenger RNA (tmRNA), required for stable association of tmRNA with ribosomes. tmRNA and SmpB together mimic tRNA shape, replacing the anticodon stem-loop with SmpB. tmRNA is encoded by the ssrA gene; the 2 termini fold to resemble tRNA(Ala) and it encodes a 'tag peptide', a short internal open reading frame. During trans-translation Ala-aminoacylated tmRNA acts like a tRNA, entering the A-site of stalled ribosomes, displacing the stalled mRNA. The ribosome then switches to translate the ORF on the tmRNA; the nascent peptide is terminated with the 'tag peptide' encoded by the tmRNA and targeted for degradation. The ribosome is freed to recommence translation, which seems to be the essential function of trans-translation. The polypeptide is SsrA-binding protein (Geobacillus kaustophilus (strain HTA426)).